A 255-amino-acid polypeptide reads, in one-letter code: Thiazole synthase (255 aa).

Catalysis depends on lysine 96, which acts as the Schiff-base intermediate with DXP. 1-deoxy-D-xylulose 5-phosphate contacts are provided by residues glycine 157, 183-184 (AG), and 205-206 (NT).

Belongs to the ThiG family. As to quaternary structure, homotetramer. Forms heterodimers with either ThiH or ThiS.

It is found in the cytoplasm. It carries out the reaction [ThiS sulfur-carrier protein]-C-terminal-Gly-aminoethanethioate + 2-iminoacetate + 1-deoxy-D-xylulose 5-phosphate = [ThiS sulfur-carrier protein]-C-terminal Gly-Gly + 2-[(2R,5Z)-2-carboxy-4-methylthiazol-5(2H)-ylidene]ethyl phosphate + 2 H2O + H(+). The protein operates within cofactor biosynthesis; thiamine diphosphate biosynthesis. Its function is as follows. Catalyzes the rearrangement of 1-deoxy-D-xylulose 5-phosphate (DXP) to produce the thiazole phosphate moiety of thiamine. Sulfur is provided by the thiocarboxylate moiety of the carrier protein ThiS. In vitro, sulfur can be provided by H(2)S. The chain is Thiazole synthase from Staphylococcus saprophyticus subsp. saprophyticus (strain ATCC 15305 / DSM 20229 / NCIMB 8711 / NCTC 7292 / S-41).